We begin with the raw amino-acid sequence, 306 residues long: tRNA dimethylallyltransferase (306 aa).

11-18 contributes to the ATP binding site; it reads GPTAVGKS. 13–18 is a substrate binding site; sequence TAVGKS. An interaction with substrate tRNA region spans residues 35–38; it reads DSIQ.

This sequence belongs to the IPP transferase family. Monomer. Mg(2+) is required as a cofactor.

It carries out the reaction adenosine(37) in tRNA + dimethylallyl diphosphate = N(6)-dimethylallyladenosine(37) in tRNA + diphosphate. In terms of biological role, catalyzes the transfer of a dimethylallyl group onto the adenine at position 37 in tRNAs that read codons beginning with uridine, leading to the formation of N6-(dimethylallyl)adenosine (i(6)A). This chain is tRNA dimethylallyltransferase, found in Borreliella burgdorferi (strain ZS7) (Borrelia burgdorferi).